Reading from the N-terminus, the 557-residue chain is Dihydroxy-acid dehydratase 1 (557 aa).

Cys50 contacts [2Fe-2S] cluster. A Mg(2+)-binding site is contributed by Asp82. Residue Cys123 coordinates [2Fe-2S] cluster. Positions 124 and 125 each coordinate Mg(2+). At Lys125 the chain carries N6-carboxylysine. Cys195 is a [2Fe-2S] cluster binding site. Mg(2+) is bound at residue Glu447. Catalysis depends on Ser473, which acts as the Proton acceptor.

It belongs to the IlvD/Edd family. As to quaternary structure, homodimer. [2Fe-2S] cluster serves as cofactor. It depends on Mg(2+) as a cofactor.

It carries out the reaction (2R)-2,3-dihydroxy-3-methylbutanoate = 3-methyl-2-oxobutanoate + H2O. The enzyme catalyses (2R,3R)-2,3-dihydroxy-3-methylpentanoate = (S)-3-methyl-2-oxopentanoate + H2O. The protein operates within amino-acid biosynthesis; L-isoleucine biosynthesis; L-isoleucine from 2-oxobutanoate: step 3/4. It functions in the pathway amino-acid biosynthesis; L-valine biosynthesis; L-valine from pyruvate: step 3/4. Functionally, functions in the biosynthesis of branched-chain amino acids. Catalyzes the dehydration of (2R,3R)-2,3-dihydroxy-3-methylpentanoate (2,3-dihydroxy-3-methylvalerate) into 2-oxo-3-methylpentanoate (2-oxo-3-methylvalerate) and of (2R)-2,3-dihydroxy-3-methylbutanoate (2,3-dihydroxyisovalerate) into 2-oxo-3-methylbutanoate (2-oxoisovalerate), the penultimate precursor to L-isoleucine and L-valine, respectively. This chain is Dihydroxy-acid dehydratase 1, found in Cupriavidus pinatubonensis (strain JMP 134 / LMG 1197) (Cupriavidus necator (strain JMP 134)).